Reading from the N-terminus, the 524-residue chain is Excitatory amino acid transporter 3 (524 aa).

Over 1–18 (MGKPARKGCDWKRFLRNN) the chain is Cytoplasmic. Residues 19-38 (WLLLSTVVAVVLGIVIGVLV) traverse the membrane as a helical segment. Residues 39-61 (REYSKLSNLEKFYFSFPGEILMR) lie on the Extracellular side of the membrane. Residues 62–82 (MLKLVILPLIVSSMITGVATL) traverse the membrane as a helical segment. At 83 to 93 (DSNVSGKIGLR) the chain is on the cytoplasmic side. A helical transmembrane segment spans residues 94–114 (AVVYYFCTTLIAVILGIVLVV). Na(+) contacts are provided by tyrosine 98, threonine 101, and threonine 102. At 115–205 (SIKPGVTQKV…KTKEYKVVGM (91 aa)) the chain is on the extracellular side. N-linked (GlcNAc...) asparagine glycosylation is found at asparagine 178 and asparagine 195. Residues 206–229 (YSDGINVLGLIVFCLVLGIVIGRK) form a helical membrane-spanning segment. The Cytoplasmic segment spans residues 230-238 (WEKGQILVD). The chain crosses the membrane as a helical span at residues 239–266 (FFNALSDATMKIVQIIMCYMPIGILFLI). Residues 267–286 (AGKIIEVEDWEIFRKLGLYM) are Extracellular-facing. A helical membrane pass occupies residues 287–308 (ATVLSGLAIHSIVILPLIYFII). Residues 309-313 (VRKNP) are Cytoplasmic-facing. The discontinuously helical intramembrane region spans 314-344 (FQFAMGMAQALLTALMISSSSATLPVTFRCA). L-aspartate is bound by residues serine 331 and serine 333. The Cytoplasmic portion of the chain corresponds to 345 to 353 (EEKNRVDKR). The chain crosses the membrane as a helical span at residues 354-380 (ITRFVLPVGATINMDGTALYEAVAAVF). Na(+) contacts are provided by glycine 362, threonine 364, asparagine 366, and aspartate 368. Threonine 370 serves as a coordination point for L-aspartate. Over 381–393 (IAQLNDLDLSVGQ) the chain is Extracellular. The discontinuously helical intramembrane region spans 394–427 (IITISVTATAASIGAAGVPQPGLVTMVIVLSAVG). Positions 405, 406, and 408 each coordinate Na(+). Valine 411 is a binding site for L-aspartate. The Extracellular segment spans residues 428 to 440 (LPAEDVTLIIAVD). A helical transmembrane segment spans residues 441-462 (WLLDRFRTMVNVLGDAFGTGIV). L-aspartate-binding residues include arginine 447, threonine 448, and asparagine 451. Na(+) is bound by residues asparagine 451 and aspartate 455. At 463–524 (EKLSKKELEQ…TISFTQTSQF (62 aa)) the chain is on the cytoplasmic side. Serine 517 and serine 522 each carry phosphoserine.

The protein belongs to the dicarboxylate/amino acid:cation symporter (DAACS) (TC 2.A.23) family. SLC1A1 subfamily. As to quaternary structure, homotrimer. Interacts with ARL6IP5. Interacts with RTN2 (via N-terminus); the interaction promotes cell surface expression of SLC1A1. Interacts with SORCS2; this interaction is important for normal expression at the cell membrane.

The protein localises to the cell membrane. Its subcellular location is the apical cell membrane. The protein resides in the synapse. It localises to the synaptosome. It is found in the early endosome membrane. The protein localises to the late endosome membrane. Its subcellular location is the recycling endosome membrane. The enzyme catalyses K(+)(in) + L-glutamate(out) + 3 Na(+)(out) + H(+)(out) = K(+)(out) + L-glutamate(in) + 3 Na(+)(in) + H(+)(in). It carries out the reaction K(+)(in) + L-aspartate(out) + 3 Na(+)(out) + H(+)(out) = K(+)(out) + L-aspartate(in) + 3 Na(+)(in) + H(+)(in). The catalysed reaction is D-aspartate(out) + K(+)(in) + 3 Na(+)(out) + H(+)(out) = D-aspartate(in) + K(+)(out) + 3 Na(+)(in) + H(+)(in). It catalyses the reaction K(+)(in) + L-cysteine(out) + 3 Na(+)(out) + H(+)(out) = K(+)(out) + L-cysteine(in) + 3 Na(+)(in) + H(+)(in). Functionally, sodium-dependent, high-affinity amino acid transporter that mediates the uptake of L-glutamate and also L-aspartate and D-aspartate. Can also transport L-cysteine. Functions as a symporter that transports one amino acid molecule together with two or three Na(+) ions and one proton, in parallel with the counter-transport of one K(+) ion. Mediates Cl(-) flux that is not coupled to amino acid transport; this avoids the accumulation of negative charges due to aspartate and Na(+) symport. Plays an important role in L-glutamate and L-aspartate reabsorption in renal tubuli. Plays a redundant role in the rapid removal of released glutamate from the synaptic cleft, which is essential for terminating the postsynaptic action of glutamate. Contributes to glutathione biosynthesis and protection against oxidative stress via its role in L-glutamate and L-cysteine transport. Negatively regulated by ARL6IP5. The sequence is that of Excitatory amino acid transporter 3 (SLC1A1) from Bos taurus (Bovine).